The chain runs to 169 residues: ATP synthase subunit b (169 aa).

The chain crosses the membrane as a helical span at residues 11–31; it reads IPSFIAQVVNFGLLLGLLYLF.

Belongs to the ATPase B chain family. In terms of assembly, F-type ATPases have 2 components, F(1) - the catalytic core - and F(0) - the membrane proton channel. F(1) has five subunits: alpha(3), beta(3), gamma(1), delta(1), epsilon(1). F(0) has three main subunits: a(1), b(2) and c(10-14). The alpha and beta chains form an alternating ring which encloses part of the gamma chain. F(1) is attached to F(0) by a central stalk formed by the gamma and epsilon chains, while a peripheral stalk is formed by the delta and b chains.

It localises to the cell membrane. Its function is as follows. F(1)F(0) ATP synthase produces ATP from ADP in the presence of a proton or sodium gradient. F-type ATPases consist of two structural domains, F(1) containing the extramembraneous catalytic core and F(0) containing the membrane proton channel, linked together by a central stalk and a peripheral stalk. During catalysis, ATP synthesis in the catalytic domain of F(1) is coupled via a rotary mechanism of the central stalk subunits to proton translocation. Component of the F(0) channel, it forms part of the peripheral stalk, linking F(1) to F(0). This is ATP synthase subunit b from Dehalococcoides mccartyi (strain ATCC BAA-2266 / KCTC 15142 / 195) (Dehalococcoides ethenogenes (strain 195)).